We begin with the raw amino-acid sequence, 120 residues long: NAD(P)H-quinone oxidoreductase subunit 3, chloroplastic (120 aa).

Helical transmembrane passes span 14 to 34 (LIISSLIPILAFFISGILAPI), 64 to 84 (MFALVFVVFDVETVFLYPWAM), and 88 to 108 (ILGVSVFIEALIFVLILIVGL).

This sequence belongs to the complex I subunit 3 family. In terms of assembly, NDH is composed of at least 16 different subunits, 5 of which are encoded in the nucleus.

The protein localises to the plastid. The protein resides in the chloroplast thylakoid membrane. It carries out the reaction a plastoquinone + NADH + (n+1) H(+)(in) = a plastoquinol + NAD(+) + n H(+)(out). It catalyses the reaction a plastoquinone + NADPH + (n+1) H(+)(in) = a plastoquinol + NADP(+) + n H(+)(out). NDH shuttles electrons from NAD(P)H:plastoquinone, via FMN and iron-sulfur (Fe-S) centers, to quinones in the photosynthetic chain and possibly in a chloroplast respiratory chain. The immediate electron acceptor for the enzyme in this species is believed to be plastoquinone. Couples the redox reaction to proton translocation, and thus conserves the redox energy in a proton gradient. The sequence is that of NAD(P)H-quinone oxidoreductase subunit 3, chloroplastic from Coffea arabica (Arabian coffee).